The following is a 298-amino-acid chain: Probable endonuclease 4 (298 aa).

H69, H111, E146, D180, H183, H215, D228, H230, and E260 together coordinate Zn(2+).

This sequence belongs to the AP endonuclease 2 family. Zn(2+) serves as cofactor.

The catalysed reaction is Endonucleolytic cleavage to 5'-phosphooligonucleotide end-products.. In terms of biological role, endonuclease IV plays a role in DNA repair. It cleaves phosphodiester bonds at apurinic or apyrimidinic (AP) sites, generating a 3'-hydroxyl group and a 5'-terminal sugar phosphate. This is Probable endonuclease 4 from Bacillus cereus (strain G9842).